The primary structure comprises 832 residues: Serine/threonine-protein kinase Doa (832 aa).

Disordered regions lie at residues 1–86 (MVAA…SKYI), 135–158 (LLQHQQQQHHQQQQQQHQEQQQYP), 179–215 (SDPFMQQQHMPAHQQQQHLPHKLQQSYSSSHVPKQAP), and 258–419 (SKIG…QLQQ). Residues 8–18 (VPTSSSSSAAT) are compositionally biased toward polar residues. Positions 20–32 (RQKDVDNKLEKCL) are enriched in basic and acidic residues. Composition is skewed to low complexity over residues 40-53 (TSSNNNSTSNSNNN), 137-158 (QHQQQQHHQQQQQQHQEQQQYP), and 183-203 (MQQQHMPAHQQQQHLPHKLQQ). Over residues 271-282 (HSASFSSAQRPT) the composition is skewed to polar residues. 3 stretches are compositionally biased toward low complexity: residues 285-310 (QFHQQHQQQQHLQQQQQHPQQQQHQH), 347-365 (QMQPVKYQQQQQHPHTQFQ), and 396-419 (SSSSNKQPQQPQQQQQQQQSQLQQ). One can recognise a Protein kinase domain in the interval 479-799 (YKIMATLGEG…LGEALHHPFF (321 aa)). ATP contacts are provided by residues 485 to 493 (LGEGTFGRV) and lysine 508. Aspartate 605 acts as the Proton acceptor in catalysis. Residues 809–832 (GEVSNKQPLSSGSSSRERSHSLSR) form a disordered region. A compositionally biased stretch (basic and acidic residues) spans 823 to 832 (SRERSHSLSR).

This sequence belongs to the protein kinase superfamily. CMGC Ser/Thr protein kinase family. Lammer subfamily. As to quaternary structure, interacts (via N-terminus) with x16 (via Arg/Ser-rich region). Interacts with eEF1gamma (via C-terminus); the interaction is probably direct, is transient and leads to phosphorylation of eEF1gamma by Doa. It depends on Mg(2+) as a cofactor. Post-translationally, autophosphorylated on serine, threonine and tyrosine residues. In terms of tissue distribution, ubiquitous expression in embryos. Stage 17 embryos show elevated expression in CNS and brain. Ubiquitous expression in larval imaginal disks. Increased expression posterior to the eye-antennal disk morphogenetic furrow.

It localises to the cytoplasm. It is found in the cytosol. The protein localises to the nucleus. It catalyses the reaction L-seryl-[protein] + ATP = O-phospho-L-seryl-[protein] + ADP + H(+). It carries out the reaction L-threonyl-[protein] + ATP = O-phospho-L-threonyl-[protein] + ADP + H(+). The enzyme catalyses L-tyrosyl-[protein] + ATP = O-phospho-L-tyrosyl-[protein] + ADP + H(+). Dual specificity kinase involved in the negative regulation of microtubule-based transport through phsophorylation of the microtuble-binding protein eEF1gamma. May function in the control of alternative splicing by phosphorylating serine/arginine-rich splicing factors, the SR proteins, including x16. Negative regulator of the copia retrotransposon element of the white (w) gene. In the eye, it is required for normal pigmentation, photoreceptor cell development and for organization of interommatidial bristles. Also essential for embryonic segmentation and differentiation of the nervous system. Functionally, may be the specific isoform involved in regulation of microtubule-based transport through phosphorylation of the microtubule binding protein eEF1gamma. In Drosophila melanogaster (Fruit fly), this protein is Serine/threonine-protein kinase Doa.